We begin with the raw amino-acid sequence, 45 residues long: Parabutoporin (45 aa).

In terms of assembly, monomer and homodimer. In terms of tissue distribution, expressed by the venom gland.

The protein localises to the secreted. The protein resides in the target cell membrane. Its function is as follows. At high concentrations, acts as a pore former in cellular membranes and causes the leakage of the cells. At submicromolar concentrations, degranulates granulocytes and has a weak hemolytic activity against human red blood cells. Also strongly inhibits the production of superoxide anions. Has a strong antibacterial activity against Gram-negative bacteria but is less active against Gram-positive bacteria. Also has antifungal activity. Induces reversible G-protein dependent Ca(2+) release from intracellular stores and increase Ca(2+) influx in HL-60 cells. Induces the activation of the Rac pathway in granulocytes. Synergistically enhances the excitatory effects of short and long chain ion-channel-specific neurotoxins by interaction with the neuronal membranes. This chain is Parabutoporin, found in Parabuthus schlechteri (Scorpion).